The primary structure comprises 200 residues: Protein GrpE (200 aa).

The interval 15–47 is disordered; sequence DLEMDLNEEELEESEVNEDKEFEELDKSEEENE. The segment covering 16–47 has biased composition (acidic residues); the sequence is LEMDLNEEELEESEVNEDKEFEELDKSEEENE.

The protein belongs to the GrpE family. Homodimer.

It is found in the cytoplasm. Its function is as follows. Participates actively in the response to hyperosmotic and heat shock by preventing the aggregation of stress-denatured proteins, in association with DnaK and GrpE. It is the nucleotide exchange factor for DnaK and may function as a thermosensor. Unfolded proteins bind initially to DnaJ; upon interaction with the DnaJ-bound protein, DnaK hydrolyzes its bound ATP, resulting in the formation of a stable complex. GrpE releases ADP from DnaK; ATP binding to DnaK triggers the release of the substrate protein, thus completing the reaction cycle. Several rounds of ATP-dependent interactions between DnaJ, DnaK and GrpE are required for fully efficient folding. This Clostridium tetani (strain Massachusetts / E88) protein is Protein GrpE.